The primary structure comprises 540 residues: Pentatricopeptide repeat-containing protein At1g14470 (540 aa).

PPR repeat units follow at residues 70 to 104 (NVFVVNSMFKYFSKMDMANDVLRLYEQRSRCGIMP), 105 to 134 (DAFSFPVVIKSAGRFGILFQALVEKLGFFK), 135 to 165 (DPYVRNVIMDMYVKHESVESARKVFDQISQR), 166 to 196 (KGSDWNVMISGYWKWGNKEEACKLFDMMPEN), 197 to 227 (DVVSWTVMITGFAKVKDLENARKYFDRMPEK), 228 to 262 (SVVSWNAMLSGYAQNGFTEDALRLFNDMLRLGVRP), 263 to 297 (NETTWVIVISACSFRADPSLTRSLVKLIDEKRVRL), 298 to 328 (NCFVKTALLDMHAKCRDIQSARRIFNELGTQ), 330 to 364 (NLVTWNAMISGYTRIGDMSSARQLFDTMPKRNVVS), 365 to 395 (WNSLIAGYAHNGQAALAIEFFEDMIDYGDSK), 397 to 431 (DEVTMISVLSACGHMADLELGDCIVDYIRKNQIKL), 432 to 462 (NDSGYRSLIFMYARGGNLWEAKRVFDEMKER), 463 to 497 (DVVSYNTLFTAFAANGDGVETLNLLSKMKDEGIEP), and 498 to 528 (DRVTYTSVLTACNRAGLLKEGQRIFKSIRNP).

It belongs to the PPR family. PCMP-A subfamily.

The protein is Pentatricopeptide repeat-containing protein At1g14470 (PCMP-A4) of Arabidopsis thaliana (Mouse-ear cress).